The primary structure comprises 63 residues: Jingdongin-1 (63 aa).

A signal peptide spans 1–22 (MLTLKKSMLLLFFLGTINLSLC). Positions 23–44 (EQERDADEEERRDDDEMDVEVE) are excised as a propeptide. Cys-57 and Cys-63 are disulfide-bonded.

As to expression, expressed by the skin glands.

The protein localises to the secreted. The synthetic peptide has antimicrobial activity against Gram-negative bacterium B.dysenteriae (MIC=35 ug/ml), against Gram-positive bacteria S.aureus ATCC 2592 (MIC=4.7 ug/ml) and B.subtilis ATCC 6633 (MIC=9.38 ug/ml) and against fungus C.albicans (MIC=18.75 ug/ml). Has no activity against Gram-negative bacterium E.coli ATCC 25922 but exhibits low hemolytic activity at concentrations up to 200 ug/ml. The polypeptide is Jingdongin-1 (Amolops jingdongensis (Chinese torrent frog)).